The primary structure comprises 452 residues: Glycine receptor subunit alpha-2 (452 aa).

The N-terminal stretch at Met1–Cys27 is a signal peptide. Residues Lys28–Tyr256 lie on the Extracellular side of the membrane. Residue Asn72 is glycosylated (N-linked (GlcNAc...) asparagine). Arg99 contributes to the glycine binding site. A strychnine-binding site is contributed by Arg99. An N-linked (GlcNAc...) asparagine glycan is attached at Asn103. Ser163 contacts glycine. Cysteines 172 and 186 form a disulfide. Zn(2+) contacts are provided by Glu226 and Glu228. Cys232 and Cys243 are disulfide-bonded. Position 238 (Thr238) interacts with glycine. His249 lines the Zn(2+) pocket. The helical transmembrane segment at Tyr257–Ile278 threads the bilayer. Residues Asn279–Ala283 are Cytoplasmic-facing. The helical transmembrane segment at Pro284 to Ser304 threads the bilayer. Over Arg305–Lys315 the chain is Extracellular. A helical transmembrane segment spans residues Ala316 to Ala336. The Cytoplasmic portion of the chain corresponds to Ala337–Thr420. Residues Ile421–Tyr441 traverse the membrane as a helical segment. The Extracellular portion of the chain corresponds to Lys442–Lys452.

This sequence belongs to the ligand-gated ion channel (TC 1.A.9) family. Glycine receptor (TC 1.A.9.3) subfamily. GLRA2 sub-subfamily. In terms of assembly, interacts with GLRB. Heteropentamer composed of GLRA2 and GLRB. Functional GLRB-GLRA2 heteropentamers contain four GLRA2 subunits and one GLRB subunit, although alternative subunit composition cannot be excluded. Homopentamer (in vitro). Both homopentamers and heteropentamers form functional ion channels, but their characteristics are subtly different.

It localises to the postsynaptic cell membrane. It is found in the synapse. Its subcellular location is the cell membrane. The protein resides in the cell projection. The catalysed reaction is chloride(in) = chloride(out). With respect to regulation, channel opening is triggered by extracellular glycine. Channel opening is also triggered by taurine and beta-alanine. Inhibited by strychnine. Inhibited by picrotoxin. Channel activity is potentiated by 10-100 uM Zn(2+). Channel activity is marginally increased by 50 mM ethanol; it is strongly increased by a combination of 0.5 uM Zn(2+) and 50 mM ethanol. Channel activity is inhibited by 100-1000 uM Zn(2+). Subunit of heteromeric glycine-gated chloride channels. Plays a role in synaptic plasticity. Contributes to the generation of inhibitory postsynaptic currents, and is involved in the down-regulation of neuronal excitability. Plays a role in cellular responses to ethanol. The chain is Glycine receptor subunit alpha-2 from Homo sapiens (Human).